The sequence spans 293 residues: Acetylglutamate kinase (293 aa).

Substrate contacts are provided by residues 66-67 (GG), Arg88, and Asn190.

It belongs to the acetylglutamate kinase family. ArgB subfamily.

It localises to the cytoplasm. The enzyme catalyses N-acetyl-L-glutamate + ATP = N-acetyl-L-glutamyl 5-phosphate + ADP. The protein operates within amino-acid biosynthesis; L-arginine biosynthesis; N(2)-acetyl-L-ornithine from L-glutamate: step 2/4. Functionally, catalyzes the ATP-dependent phosphorylation of N-acetyl-L-glutamate. This chain is Acetylglutamate kinase, found in Thiobacillus denitrificans (strain ATCC 25259 / T1).